The sequence spans 332 residues: 2,3-diketo-L-gulonate reductase (332 aa).

The active-site Proton donor is the H44. Residues 168 to 174, 224 to 225, and 304 to 306 each bind NAD(+); these read ITMVDMS, WK, and GHE.

Belongs to the LDH2/MDH2 oxidoreductase family. DlgD subfamily. Homodimer.

Its subcellular location is the cytoplasm. The enzyme catalyses 3-dehydro-L-gulonate + NAD(+) = 2,3-dioxo-L-gulonate + NADH + H(+). The catalysed reaction is 3-dehydro-L-gulonate + NADP(+) = 2,3-dioxo-L-gulonate + NADPH + H(+). Its function is as follows. Catalyzes the reduction of 2,3-diketo-L-gulonate in the presence of NADH, to form 3-keto-L-gulonate. This Escherichia coli O127:H6 (strain E2348/69 / EPEC) protein is 2,3-diketo-L-gulonate reductase.